The chain runs to 275 residues: NH(3)-dependent NAD(+) synthetase (275 aa).

46-53 (GISGGQDS) serves as a coordination point for ATP. Residue Asp52 participates in Mg(2+) binding. Arg140 contributes to the deamido-NAD(+) binding site. Residue Thr160 coordinates ATP. Glu165 contributes to the Mg(2+) binding site. 2 residues coordinate deamido-NAD(+): Lys173 and Asp180. ATP contacts are provided by Lys189 and Thr211. Position 260–261 (260–261 (HK)) interacts with deamido-NAD(+).

Belongs to the NAD synthetase family. As to quaternary structure, homodimer.

The enzyme catalyses deamido-NAD(+) + NH4(+) + ATP = AMP + diphosphate + NAD(+) + H(+). It participates in cofactor biosynthesis; NAD(+) biosynthesis; NAD(+) from deamido-NAD(+) (ammonia route): step 1/1. Catalyzes the ATP-dependent amidation of deamido-NAD to form NAD. Uses ammonia as a nitrogen source. The polypeptide is NH(3)-dependent NAD(+) synthetase (Salmonella choleraesuis (strain SC-B67)).